The primary structure comprises 596 residues: Elongation factor 4 (596 aa).

The tr-type G domain maps to 2–184; the sequence is KHIRNFSIIA…TIVAQIPPPE (183 aa). Residues 14 to 19 and 131 to 134 contribute to the GTP site; these read DHGKST and NKID.

The protein belongs to the TRAFAC class translation factor GTPase superfamily. Classic translation factor GTPase family. LepA subfamily.

It is found in the cell inner membrane. The enzyme catalyses GTP + H2O = GDP + phosphate + H(+). In terms of biological role, required for accurate and efficient protein synthesis under certain stress conditions. May act as a fidelity factor of the translation reaction, by catalyzing a one-codon backward translocation of tRNAs on improperly translocated ribosomes. Back-translocation proceeds from a post-translocation (POST) complex to a pre-translocation (PRE) complex, thus giving elongation factor G a second chance to translocate the tRNAs correctly. Binds to ribosomes in a GTP-dependent manner. The chain is Elongation factor 4 from Shewanella loihica (strain ATCC BAA-1088 / PV-4).